A 175-amino-acid polypeptide reads, in one-letter code: Movement protein (175 aa).

The tract at residues alanine 30 to leucine 47 is homodimerization. Positions glutamate 50 to glycine 156 are RNA-binding. Disordered regions lie at residues phenylalanine 58–serine 89 and serine 103–arginine 175. A compositionally biased stretch (basic and acidic residues) spans isoleucine 63–serine 74. Residues serine 64 and serine 133 each carry the phosphoserine modification. Composition is skewed to polar residues over residues proline 115 to proline 141 and arginine 148 to lysine 169.

Belongs to the polerovirus movement protein family. As to quaternary structure, homodimer. Phosphorylated.

It localises to the host cell junction. It is found in the host plasmodesma. Its subcellular location is the host Golgi apparatus. In terms of biological role, together with movement protein P3a, facilitates long-distance movement of virions in host. Transports viral genome to neighboring plant cells directly through plasmosdesmata, without any budding. The movement protein allows efficient cell to cell propagation, by bypassing the host cell wall barrier. Binds ssRNA. The sequence is that of Movement protein from Beta vulgaris (Sugar beet).